Reading from the N-terminus, the 414-residue chain is MADLHLAKSITLRCGLTLPNRLAKTAIAESIAPRNMLIDEGFHRVYAPWAEGGWGMVLTGHVQVDSMHLGTHTDPAVNADFSDDQIVGSWKVWAAVCNRHGTPTIMQLNHPGRQAPIGAGTSGVFAKNISASAVPMDIGSGLLARAVSKIVFGTPREMTVDDIGKLVRQFARAARLASQSGFAGVELHASHGYLLAQFLSAATNRRKDAYGGTPANRARIVVEIIKAVRAEVPASFCVGIILTAVHGSASTEEFQSFIEQAQLICDAGVDFIEISGGTFETPSMFIGPEKRGKAYDWDNQEAFFLDFAQAIRPHLGTVPLLLTGGFRSCHAMEAAVKRGDCDMIGLARPAVVNPLLPKTVVFNPEVNKSGDTKLHATRTPAPWYIKLFGITALNVHMDNAWYVGRLQTLAKTGR.

Residues 25 to 28 and Gln-107 each bind FMN; that span reads TAIA. Residue 188-191 coordinates substrate; that stretch reads HASH. FMN is bound at residue 347–348; it reads AR.

This sequence belongs to the NADH:flavin oxidoreductase/NADH oxidase family.

It carries out the reaction 8-epi-ilicicolin H = ilicicolin H. Its pathway is mycotoxin biosynthesis. Functionally, NADH-dependent flavin oxidoreductase; part of the gene cluster that mediates the biosynthesis of ilicicolin H, a 4-hydroxy-2-pyridonealkaloid that has potent and broad antifungal activities by inhibiting the mitochondrial respiration chain. IccE acts as an epimerase and catalyzes the conversion of 8-epi-ilicicolin H into the final product ilicicolin H. The biosynthesis of ilicicolin H starts with formation of the tetramic acid by the hybrid PKS-NRPS synthetase iccA with the partnering trans-enoyl reductase iccB since iccA lacks a designated enoylreductase (ER) domain. The cytochrome P450 monooxygenase iccC then catalyzes the ring expansion of the tetramate to the acyclic 2-pyridone. The pericyclase iccD further converts the acyclic 2-pyridone into 8-epi-ilicicolin H. Finally, the epimerase iccE converts 8-epi-ilicicolin H into ilicicolin H via epimerization. IccA to iccE are sufficient for ilicicolin H biosynthesis and the roles of the remaining enzymes, iccF, iccG and iccH within the pathway have still to be determined. This chain is NADH-dependent flavin oxidoreductase iccE, found in Talaromyces variabilis (Penicillium variabile).